A 69-amino-acid chain; its full sequence is Large ribosomal subunit protein bL31 (69 aa).

The protein belongs to the bacterial ribosomal protein bL31 family. Type A subfamily. In terms of assembly, part of the 50S ribosomal subunit.

Functionally, binds the 23S rRNA. This is Large ribosomal subunit protein bL31 from Magnetococcus marinus (strain ATCC BAA-1437 / JCM 17883 / MC-1).